The chain runs to 48 residues: Ribulose bisphosphate carboxylase large chain (48 aa).

Belongs to the RuBisCO large chain family. Type I subfamily. As to quaternary structure, heterohexadecamer of 8 large chains and 8 small chains.

It localises to the plastid. It is found in the chloroplast. It catalyses the reaction 2 (2R)-3-phosphoglycerate + 2 H(+) = D-ribulose 1,5-bisphosphate + CO2 + H2O. The catalysed reaction is D-ribulose 1,5-bisphosphate + O2 = 2-phosphoglycolate + (2R)-3-phosphoglycerate + 2 H(+). Functionally, ruBisCO catalyzes two reactions: the carboxylation of D-ribulose 1,5-bisphosphate, the primary event in carbon dioxide fixation, as well as the oxidative fragmentation of the pentose substrate in the photorespiration process. Both reactions occur simultaneously and in competition at the same active site. The polypeptide is Ribulose bisphosphate carboxylase large chain (rbcL) (Pinus pinaster (Maritime pine)).